A 273-amino-acid polypeptide reads, in one-letter code: Dermonecrotic toxin SdSicTox-betaIIB1aiii (273 aa).

His4 is a catalytic residue. Residues Glu24 and Asp26 each contribute to the Mg(2+) site. His40 (nucleophile) is an active-site residue. Disulfide bonds link Cys44-Cys50 and Cys46-Cys189. Asp84 contributes to the Mg(2+) binding site.

Belongs to the arthropod phospholipase D family. Class II subfamily. It depends on Mg(2+) as a cofactor. In terms of tissue distribution, expressed by the venom gland.

Its subcellular location is the secreted. The catalysed reaction is an N-(acyl)-sphingosylphosphocholine = an N-(acyl)-sphingosyl-1,3-cyclic phosphate + choline. It carries out the reaction an N-(acyl)-sphingosylphosphoethanolamine = an N-(acyl)-sphingosyl-1,3-cyclic phosphate + ethanolamine. The enzyme catalyses a 1-acyl-sn-glycero-3-phosphocholine = a 1-acyl-sn-glycero-2,3-cyclic phosphate + choline. It catalyses the reaction a 1-acyl-sn-glycero-3-phosphoethanolamine = a 1-acyl-sn-glycero-2,3-cyclic phosphate + ethanolamine. Its function is as follows. Dermonecrotic toxins cleave the phosphodiester linkage between the phosphate and headgroup of certain phospholipids (sphingolipid and lysolipid substrates), forming an alcohol (often choline) and a cyclic phosphate. This toxin acts on sphingomyelin (SM). It may also act on ceramide phosphoethanolamine (CPE), lysophosphatidylcholine (LPC) and lysophosphatidylethanolamine (LPE), but not on lysophosphatidylserine (LPS), and lysophosphatidylglycerol (LPG). It acts by transphosphatidylation, releasing exclusively cyclic phosphate products as second products. Induces dermonecrosis, hemolysis, increased vascular permeability, edema, inflammatory response, and platelet aggregation. The polypeptide is Dermonecrotic toxin SdSicTox-betaIIB1aiii (Sicarius cf. damarensis (strain GJB-2008) (Six-eyed sand spider)).